A 245-amino-acid polypeptide reads, in one-letter code: DNA polymerase sliding clamp (245 aa).

Belongs to the PCNA family. Homotrimer. The subunits circularize to form a toroid; DNA passes through its center. Replication factor C (RFC) is required to load the toroid on the DNA.

Sliding clamp subunit that acts as a moving platform for DNA processing. Responsible for tethering the catalytic subunit of DNA polymerase and other proteins to DNA during high-speed replication. The chain is DNA polymerase sliding clamp from Methanosarcina acetivorans (strain ATCC 35395 / DSM 2834 / JCM 12185 / C2A).